Here is a 311-residue protein sequence, read N- to C-terminus: tRNA pseudouridine synthase B (311 aa).

Residue His43 participates in substrate binding. Asp48 serves as the catalytic Nucleophile. Residues Tyr76, Tyr179, and Leu200 each coordinate substrate.

Belongs to the pseudouridine synthase TruB family. Type 1 subfamily.

It catalyses the reaction uridine(55) in tRNA = pseudouridine(55) in tRNA. Responsible for synthesis of pseudouridine from uracil-55 in the psi GC loop of transfer RNAs. The sequence is that of tRNA pseudouridine synthase B from Sodalis glossinidius (strain morsitans).